A 365-amino-acid polypeptide reads, in one-letter code: 2'-hydroxybiphenyl-2-sulfinate desulfinase (365 aa).

Residue Cys27 is part of the active site. The 2'-hydroxybiphenyl-2-sulfinate site is built by Cys27, His60, and Arg70. The active site involves Arg70.

Belongs to the DszB desulfinase family. Monomer.

It is found in the cytoplasm. It catalyses the reaction 2'-hydroxybiphenyl-2-sulfinate + H2O = biphenyl-2-ol + sulfite + H(+). It functions in the pathway sulfur metabolism; dibenzothiophene degradation. Its function is as follows. Catalyzes the third and final step of the '4S' desulfurization pathway that removes covalently bound sulfur from dibenzothiophene (DBT) without breaking carbon-carbon bonds. Oxidizes 2-(2'-hydroxyphenyl)benzene sulphinate (HBPS) to 2-hydroxybiphenyl (HBP) plus sulfite. The rate-limiting step of the '4S' desulfurization pathway. This Rhodococcus erythropolis (Arthrobacter picolinophilus) protein is 2'-hydroxybiphenyl-2-sulfinate desulfinase.